A 440-amino-acid chain; its full sequence is Probable exopolygalacturonase B (440 aa).

The first 20 residues, 1–20, serve as a signal peptide directing secretion; sequence MRLHFLPLVALCATTASSLA. N-linked (GlcNAc...) asparagine glycosylation is found at asparagine 65, asparagine 190, and asparagine 230. The active-site Proton donor is aspartate 260. Cysteines 262 and 279 form a disulfide. Asparagine 268 and asparagine 280 each carry an N-linked (GlcNAc...) asparagine glycan. The active site involves histidine 283. Residues asparagine 307, asparagine 334, and asparagine 371 are each glycosylated (N-linked (GlcNAc...) asparagine). Residues cysteine 397 and cysteine 403 are joined by a disulfide bond. Asparagine 412 is a glycosylation site (N-linked (GlcNAc...) asparagine).

This sequence belongs to the glycosyl hydrolase 28 family.

The protein localises to the secreted. The catalysed reaction is [(1-&gt;4)-alpha-D-galacturonosyl](n) + H2O = alpha-D-galacturonate + [(1-&gt;4)-alpha-D-galacturonosyl](n-1). In terms of biological role, specific in hydrolyzing the terminal glycosidic bond of polygalacturonic acid and oligogalacturonates. The sequence is that of Probable exopolygalacturonase B (pgxB) from Emericella nidulans (strain FGSC A4 / ATCC 38163 / CBS 112.46 / NRRL 194 / M139) (Aspergillus nidulans).